We begin with the raw amino-acid sequence, 200 residues long: Large ribosomal subunit protein uL4 (200 aa).

Residues 42–65 (TRAQKTRSEVSGGGAKPWRQKGTG) are disordered.

This sequence belongs to the universal ribosomal protein uL4 family. Part of the 50S ribosomal subunit.

One of the primary rRNA binding proteins, this protein initially binds near the 5'-end of the 23S rRNA. It is important during the early stages of 50S assembly. It makes multiple contacts with different domains of the 23S rRNA in the assembled 50S subunit and ribosome. In terms of biological role, forms part of the polypeptide exit tunnel. In Vibrio atlanticus (strain LGP32) (Vibrio splendidus (strain Mel32)), this protein is Large ribosomal subunit protein uL4.